Here is a 552-residue protein sequence, read N- to C-terminus: Chaperonin GroEL 1 (552 aa).

ATP contacts are provided by residues Thr-30–Pro-33, Lys-51, Asp-87–Thr-91, Gly-415, Asn-479–Ala-481, and Asp-495.

This sequence belongs to the chaperonin (HSP60) family. As to quaternary structure, forms a cylinder of 14 subunits composed of two heptameric rings stacked back-to-back. Interacts with the co-chaperonin GroES.

It localises to the cytoplasm. It carries out the reaction ATP + H2O + a folded polypeptide = ADP + phosphate + an unfolded polypeptide.. Functionally, together with its co-chaperonin GroES, plays an essential role in assisting protein folding. The GroEL-GroES system forms a nano-cage that allows encapsulation of the non-native substrate proteins and provides a physical environment optimized to promote and accelerate protein folding. The protein is Chaperonin GroEL 1 of Albidiferax ferrireducens (strain ATCC BAA-621 / DSM 15236 / T118) (Rhodoferax ferrireducens).